Consider the following 167-residue polypeptide: NADH-quinone oxidoreductase subunit B (167 aa).

Residues cysteine 40, cysteine 41, cysteine 105, and cysteine 135 each contribute to the [4Fe-4S] cluster site.

Belongs to the complex I 20 kDa subunit family. In terms of assembly, NDH-1 is composed of 14 different subunits. Subunits NuoB, C, D, E, F, and G constitute the peripheral sector of the complex. It depends on [4Fe-4S] cluster as a cofactor.

The protein resides in the cell inner membrane. The enzyme catalyses a quinone + NADH + 5 H(+)(in) = a quinol + NAD(+) + 4 H(+)(out). In terms of biological role, NDH-1 shuttles electrons from NADH, via FMN and iron-sulfur (Fe-S) centers, to quinones in the respiratory chain. The immediate electron acceptor for the enzyme in this species is believed to be ubiquinone. Couples the redox reaction to proton translocation (for every two electrons transferred, four hydrogen ions are translocated across the cytoplasmic membrane), and thus conserves the redox energy in a proton gradient. This Magnetococcus marinus (strain ATCC BAA-1437 / JCM 17883 / MC-1) protein is NADH-quinone oxidoreductase subunit B.